A 248-amino-acid chain; its full sequence is Ribosomal RNA small subunit methyltransferase G (248 aa).

A disordered region spans residues 1–23 (MFHVKHVGPVEPAAGDPEVPPVA). S-adenosyl-L-methionine is bound by residues glycine 93, leucine 98, 143-144 (AE), and arginine 161. The interval 226–248 (VVSARRAKPPHPKSARTGKAGTR) is disordered. A compositionally biased stretch (basic residues) spans 230–248 (RRAKPPHPKSARTGKAGTR).

Belongs to the methyltransferase superfamily. RNA methyltransferase RsmG family.

Its subcellular location is the cytoplasm. Specifically methylates the N7 position of guanine in position 518 of 16S rRNA. This chain is Ribosomal RNA small subunit methyltransferase G, found in Mycolicibacterium paratuberculosis (strain ATCC BAA-968 / K-10) (Mycobacterium paratuberculosis).